The primary structure comprises 349 residues: Peptide chain release factor 1 (349 aa).

Q233 carries the post-translational modification N5-methylglutamine.

This sequence belongs to the prokaryotic/mitochondrial release factor family. Post-translationally, methylated by PrmC. Methylation increases the termination efficiency of RF1.

Its subcellular location is the cytoplasm. Functionally, peptide chain release factor 1 directs the termination of translation in response to the peptide chain termination codons UAG and UAA. The polypeptide is Peptide chain release factor 1 (Pelotomaculum thermopropionicum (strain DSM 13744 / JCM 10971 / SI)).